The chain runs to 302 residues: Aspartate carbamoyltransferase catalytic subunit (302 aa).

Residues arginine 49 and threonine 50 each contribute to the carbamoyl phosphate site. Lysine 77 serves as a coordination point for L-aspartate. Residues arginine 99, histidine 126, and glutamine 129 each coordinate carbamoyl phosphate. Positions 159 and 209 each coordinate L-aspartate. Carbamoyl phosphate-binding residues include alanine 250 and proline 251.

It belongs to the aspartate/ornithine carbamoyltransferase superfamily. ATCase family. As to quaternary structure, heterododecamer (2C3:3R2) of six catalytic PyrB chains organized as two trimers (C3), and six regulatory PyrI chains organized as three dimers (R2).

The enzyme catalyses carbamoyl phosphate + L-aspartate = N-carbamoyl-L-aspartate + phosphate + H(+). The protein operates within pyrimidine metabolism; UMP biosynthesis via de novo pathway; (S)-dihydroorotate from bicarbonate: step 2/3. Catalyzes the condensation of carbamoyl phosphate and aspartate to form carbamoyl aspartate and inorganic phosphate, the committed step in the de novo pyrimidine nucleotide biosynthesis pathway. This Staphylococcus carnosus (strain TM300) protein is Aspartate carbamoyltransferase catalytic subunit.